The primary structure comprises 285 residues: MNMSKAEAFWQLTRMNRPIGSLLLLWPTLWALFLAADGLPDWHVLIVFVLGVVFMRSAGCVINDFADRKVDGHVKRTANRPLPSGLISSKEALSLFAVLVVCSFLLVLTMNTLTIMLSGIGIVLAIAYPFMKRVTYLPQFVLGLAFSWAIPMAYAAESNQVPPEAWLLFVINALWTIAYDTQYAMVDRDDDVKIGIKSTAILFGRYDKTIIGLLQLSVLALLIVLGSQLALSGIYYWGILAAAGFFVYQQWLIKGREREACFKAFLNNNYVGGLIFIAISASVLI.

9 helical membrane-spanning segments follow: residues 19-39, 42-62, 82-102, 104-124, 136-156, 166-186, 210-230, 233-253, and 265-285; these read IGSL…ADGL, WHVL…GCVI, LPSG…LVVC, FLLV…GIVL, YLPQ…AYAA, WLLF…YAMV, IIGL…SQLA, GIYY…QWLI, and FLNN…SVLI.

It belongs to the UbiA prenyltransferase family. The cofactor is Mg(2+).

It is found in the cell inner membrane. It catalyses the reaction all-trans-octaprenyl diphosphate + 4-hydroxybenzoate = 4-hydroxy-3-(all-trans-octaprenyl)benzoate + diphosphate. It participates in cofactor biosynthesis; ubiquinone biosynthesis. Catalyzes the prenylation of para-hydroxybenzoate (PHB) with an all-trans polyprenyl group. Mediates the second step in the final reaction sequence of ubiquinone-8 (UQ-8) biosynthesis, which is the condensation of the polyisoprenoid side chain with PHB, generating the first membrane-bound Q intermediate 3-octaprenyl-4-hydroxybenzoate. This is 4-hydroxybenzoate octaprenyltransferase from Aliivibrio fischeri (strain ATCC 700601 / ES114) (Vibrio fischeri).